The sequence spans 422 residues: Serine--tRNA ligase (422 aa).

231 to 233 (TAE) is an L-serine binding site. 261-263 (RSE) is an ATP binding site. E284 lines the L-serine pocket. 348–351 (EISS) is a binding site for ATP. L-serine is bound at residue S383.

This sequence belongs to the class-II aminoacyl-tRNA synthetase family. Type-1 seryl-tRNA synthetase subfamily. In terms of assembly, homodimer. The tRNA molecule binds across the dimer.

The protein resides in the cytoplasm. It carries out the reaction tRNA(Ser) + L-serine + ATP = L-seryl-tRNA(Ser) + AMP + diphosphate + H(+). The enzyme catalyses tRNA(Sec) + L-serine + ATP = L-seryl-tRNA(Sec) + AMP + diphosphate + H(+). Its pathway is aminoacyl-tRNA biosynthesis; selenocysteinyl-tRNA(Sec) biosynthesis; L-seryl-tRNA(Sec) from L-serine and tRNA(Sec): step 1/1. Its function is as follows. Catalyzes the attachment of serine to tRNA(Ser). Is also able to aminoacylate tRNA(Sec) with serine, to form the misacylated tRNA L-seryl-tRNA(Sec), which will be further converted into selenocysteinyl-tRNA(Sec). The protein is Serine--tRNA ligase of Mycoplasmopsis agalactiae (strain NCTC 10123 / CIP 59.7 / PG2) (Mycoplasma agalactiae).